The following is a 1180-amino-acid chain: Nonsense-mediated mRNA decay factor SMG7 (1180 aa).

TPR repeat units follow at residues 151–184 (QHCL…VPSN) and 186–218 (QPYN…KFPF). 5 disordered regions span residues 496–636 (PQEK…TQTT), 692–795 (QTAS…SYMQ), 893–913 (CSDQ…SSPL), 1019–1127 (SLFE…WAAQ), and 1148–1180 (SSMM…NPPH). Residues 504 to 520 (LQESSNGEQTPNESTHG) are compositionally biased toward polar residues. Composition is skewed to basic and acidic residues over residues 547 to 559 (ENIK…REQN), 584 to 606 (NEQK…KTTD), and 615 to 627 (TELR…EARK). A compositionally biased stretch (polar residues) spans 692–718 (QTASHPQSANPVQTGKPSHIPYSQQRP). The segment covering 728-740 (PPQPQQTQPPPPQ) has biased composition (pro residues). The segment covering 741–778 (TSQQALQQSVQLQLQQQQQQQQQQQQQQQQSPTKQSSQ) has biased composition (low complexity). Polar residues predominate over residues 1026–1038 (WSPSLPASSDHST). Positions 1039-1065 (PASQSPHSSNPSSLPSSPPTHSHGSMP) are enriched in low complexity. The span at 1076–1090 (DSRDRRANDRWKAEK) shows a compositional bias: basic and acidic residues. The span at 1103–1125 (SASTSSVPETNSWHQGAPTSTWA) shows a compositional bias: polar residues.

The protein resides in the cytoplasm. The protein localises to the nucleus. Functionally, plays a role in nonsense-mediated mRNA decay. Recruits UPF1 to cytoplasmic mRNA decay bodies. Together with SMG5 is thought to provide a link to the mRNA degradation machinery involving exonucleolytic pathways, and to serve as an adapter for UPF1 to protein phosphatase 2A (PP2A), thereby triggering UPF1 dephosphorylation. Required for normal embryonic development. The chain is Nonsense-mediated mRNA decay factor SMG7 from Danio rerio (Zebrafish).